The primary structure comprises 72 residues: TVSAKEGYLVKKSNGCKYECFKLGENEHCDTECKAPNQGGSYGYCDTFECWCEGLPESTPTWPLPNKSCGKK.

The signal sequence occupies residues Thr-1–Ala-4. One can recognise an LCN-type CS-alpha/beta domain in the interval Lys-5 to Gly-70. Disulfide bonds link Cys-16–Cys-69, Cys-20–Cys-45, Cys-29–Cys-50, and Cys-33–Cys-52. Residue Cys-69 is modified to Cysteine amide.

This sequence belongs to the long (4 C-C) scorpion toxin superfamily. Sodium channel inhibitor family. Beta subfamily. In terms of tissue distribution, expressed by the venom gland.

Its subcellular location is the secreted. Its function is as follows. Beta toxins bind voltage-independently at site-4 of sodium channels (Nav) and shift the voltage of activation toward more negative potentials thereby affecting sodium channel activation and promoting spontaneous and repetitive firing. This Centruroides limpidus (Mexican scorpion) protein is Toxin Cll8.